The sequence spans 150 residues: Transcription antitermination protein NusB (150 aa).

The protein belongs to the NusB family.

Its function is as follows. Involved in transcription antitermination. Required for transcription of ribosomal RNA (rRNA) genes. Binds specifically to the boxA antiterminator sequence of the ribosomal RNA (rrn) operons. The protein is Transcription antitermination protein NusB of Streptococcus pyogenes serotype M4 (strain MGAS10750).